The primary structure comprises 321 residues: uncharacterized protein (321 aa).

It belongs to the NAD(P)-dependent epimerase/dehydratase family.

This is an uncharacterized protein from Staphylococcus aureus (strain bovine RF122 / ET3-1).